The primary structure comprises 282 residues: Probable porphobilinogen deaminase (282 aa).

Cys-233 is modified (S-(dipyrrolylmethanemethyl)cysteine).

It belongs to the HMBS family. The cofactor is dipyrromethane.

The enzyme catalyses 4 porphobilinogen + H2O = hydroxymethylbilane + 4 NH4(+). Its pathway is porphyrin-containing compound metabolism; protoporphyrin-IX biosynthesis; coproporphyrinogen-III from 5-aminolevulinate: step 2/4. Tetrapolymerization of the monopyrrole PBG into the hydroxymethylbilane pre-uroporphyrinogen in several discrete steps. This Picrophilus torridus (strain ATCC 700027 / DSM 9790 / JCM 10055 / NBRC 100828 / KAW 2/3) protein is Probable porphobilinogen deaminase.